The primary structure comprises 463 residues: Retinoic acid receptor RXR-gamma (463 aa).

The tract at residues 1 to 138 is modulating; it reads MYGNYSHFMK…TSPGSLVKHI (138 aa). Residues 18 to 53 are disordered; it reads SPGHTGSTSMSPSAALSTGKPMDSHPSYTDTPVSAP. A compositionally biased stretch (polar residues) spans 21–33; it reads HTGSTSMSPSAAL. The nuclear receptor DNA-binding region spans 136 to 211; it reads KHICAICGDR…MGMKREAVQE (76 aa). 2 consecutive NR C4-type zinc fingers follow at residues 139–159 and 175–199; these read CAICGDRSSGKHYGVYSCEGC and CRDNKDCLIDKRQRNRCQYCRYQKC. The tract at residues 205 to 230 is hinge; the sequence is KREAVQEERQRSRERAESEAECATSG. Positions 231-459 constitute an NR LBD domain; that stretch reads HEDMPVERIL…TFLMEMLETP (229 aa).

This sequence belongs to the nuclear hormone receptor family. NR2 subfamily. Homodimer. Heterodimer with a RAR molecule. Binds DNA preferentially as a RAR/RXR heterodimer. Interacts with RARA. In terms of processing, acetylated by EP300. Expressed in aortic endothelial cells (at protein level).

It localises to the nucleus. It is found in the cytoplasm. In terms of biological role, receptor for retinoic acid. Retinoic acid receptors bind as heterodimers to their target response elements in response to their ligands, all-trans or 9-cis retinoic acid, and regulate gene expression in various biological processes. The RAR/RXR heterodimers bind to the retinoic acid response elements (RARE) composed of tandem 5'-AGGTCA-3' sites known as DR1-DR5. The high affinity ligand for RXRs is 9-cis retinoic acid. This Homo sapiens (Human) protein is Retinoic acid receptor RXR-gamma (RXRG).